Here is a 173-residue protein sequence, read N- to C-terminus: Membrane-bound hydrogenase subunit beta (173 aa).

This sequence belongs to the complex I 30 kDa subunit family. In terms of assembly, the membrane-bound hydrogenase complex is composed of MbhK and MbhL, and may also contain MbhJ. The cofactor is Ni(2+).

The protein localises to the cell membrane. The enzyme catalyses H2 + 2 oxidized [2Fe-2S]-[ferredoxin] = 2 reduced [2Fe-2S]-[ferredoxin] + 2 H(+). Inhibited by 0.1 mM Cu(2+). Beta subunit of a hydrogen-evolving hydrogenase that utilizes protons both as a substrate for hydrogen production and proton translocation. Acts by coupling the redox reaction via ferredoxin and iron-sulfur (Fe-S) clusters to proton translocation across the membrane thereby conserving the redox energy in a proton gradient. The sequence is that of Membrane-bound hydrogenase subunit beta from Pyrococcus furiosus (strain ATCC 43587 / DSM 3638 / JCM 8422 / Vc1).